Here is a 556-residue protein sequence, read N- to C-terminus: Urocanate hydratase (556 aa).

Residues 52-53 (GG), Gln130, 176-178 (GMG), Glu196, Arg201, 242-243 (NA), 263-267 (QTSAH), 273-274 (YL), and Tyr322 each bind NAD(+). Cys410 is a catalytic residue. Gly492 is an NAD(+) binding site.

Belongs to the urocanase family. The cofactor is NAD(+).

It localises to the cytoplasm. The enzyme catalyses 4-imidazolone-5-propanoate = trans-urocanate + H2O. It participates in amino-acid degradation; L-histidine degradation into L-glutamate; N-formimidoyl-L-glutamate from L-histidine: step 2/3. Its function is as follows. Catalyzes the conversion of urocanate to 4-imidazolone-5-propionate. The chain is Urocanate hydratase from Shewanella oneidensis (strain ATCC 700550 / JCM 31522 / CIP 106686 / LMG 19005 / NCIMB 14063 / MR-1).